A 387-amino-acid chain; its full sequence is 3-ketoacyl-CoA thiolase (387 aa).

Cys91 (acyl-thioester intermediate) is an active-site residue. Catalysis depends on proton acceptor residues His343 and Cys373.

It belongs to the thiolase-like superfamily. Thiolase family. Heterotetramer of two alpha chains (FadB) and two beta chains (FadA).

It localises to the cytoplasm. The enzyme catalyses an acyl-CoA + acetyl-CoA = a 3-oxoacyl-CoA + CoA. It participates in lipid metabolism; fatty acid beta-oxidation. Functionally, catalyzes the final step of fatty acid oxidation in which acetyl-CoA is released and the CoA ester of a fatty acid two carbons shorter is formed. This chain is 3-ketoacyl-CoA thiolase, found in Shigella sonnei (strain Ss046).